A 195-amino-acid chain; its full sequence is Myosin regulatory light chain, striated muscle, 25 kDa isoform (195 aa).

The span at 1-17 (AKDKEKKEKKDKKKDDA) shows a compositional bias: basic and acidic residues. Residues 1-39 (AKDKEKKEKKDKKKDDAPAEEAPAAAAAPAEEAAPTPSA) are disordered. Residues 20 to 39 (EEAPAAAAAPAEEAAPTPSA) show a composition bias toward low complexity. 2 consecutive EF-hand domains span residues 55–90 (NQIQEFKEAFTMIDQDRDGIIGPDDLGNIFQQIGRE) and 124–159 (DTEGTLRDAFALFDEDKLGYLLEEYVKDLLTNVGDQ). Ca(2+) contacts are provided by Asp-68, Asp-70, Asp-72, and Asp-79.

In terms of assembly, myosin is a hexamer of 2 heavy chains and 4 light chains.

Functionally, plays an important role in regulation of muscle cell contractile activity. This is Myosin regulatory light chain, striated muscle, 25 kDa isoform from Lumbricus terrestris (Common earthworm).